Here is a 193-residue protein sequence, read N- to C-terminus: MQETALLNMVPRTSTSKGANKLLRNNGYLPGNIFGKGMESISIAVKKDEFKKSIKEYGRNAVFKLVDTNNKEYTVMTKEITVAPLINEISHLNFQLVSLSEAIKQEVAFKIIGTEFLESKRLLLNSHVDSVPVSGLPHDIPHELEIDVSSMNSGDSLLFKDIKLPEGITSDVDPELKIITVKGLKRQEVAASE.

Belongs to the bacterial ribosomal protein bL25 family. CTC subfamily. Part of the 50S ribosomal subunit; part of the 5S rRNA/L5/L18/L25 subcomplex. Contacts the 5S rRNA. Binds to the 5S rRNA independently of L5 and L18.

This is one of the proteins that binds to the 5S RNA in the ribosome where it forms part of the central protuberance. The protein is Large ribosomal subunit protein bL25 of Lachnoclostridium phytofermentans (strain ATCC 700394 / DSM 18823 / ISDg) (Clostridium phytofermentans).